A 170-amino-acid chain; its full sequence is MECPVCGSNEIVWDNKNGEVVCSNCGIIIDNIYYSGQNESESTDTIIISNTFYKDEILIKELRIKNFLKKNRIKNKKTDQYEIILRSMLVDAQYKKIYKVLYDEGILSGLKAKSKLGLLIYFRFALNDRYLHQLKEFNIKNENLRKILKRIGRKRLTLIFDKLNEESDRI.

The TFIIB-type zinc finger occupies 1-30; sequence MECPVCGSNEIVWDNKNGEVVCSNCGIIID. Positions 3, 6, 22, and 25 each coordinate Zn(2+).

This sequence belongs to the TFIIB family. Zn(2+) is required as a cofactor.

This chain is TFIIB-type zinc finger protein, found in Saccharolobus shibatae (strain ATCC 51178 / DSM 5389 / JCM 8931 / NBRC 15437 / B12) (Sulfolobus shibatae).